A 236-amino-acid chain; its full sequence is Lipoprotein B (236 aa).

The first 27 residues, 1 to 27 (MNKKYFKKYSSILIFSMSILAPMTLAS), serve as a signal peptide directing secretion. C28 carries the N-palmitoyl cysteine lipid modification. A lipid anchor (S-diacylglycerol cysteine) is attached at C28. Disordered stretches follow at residues 35–112 (EKDK…KSNV) and 134–236 (SEKQ…GDAF). Positions 43-60 (STNLSEPNKSNTSKTNTF) are enriched in polar residues. A compositionally biased stretch (basic and acidic residues) spans 61-74 (QDKKDSTNKIDSQE). Composition is skewed to polar residues over residues 75-112 (SSKTQSQNTSESNQNTKVDSSKTNNLATNQNNPSKSNV) and 143-157 (NASSLNSKQINNTLK). Basic and acidic residues predominate over residues 158–175 (NQDKTKQENDQFKQESKD). Over residues 193-212 (VISSQSTTRLEMPKNDQSNS) the composition is skewed to polar residues. Basic and acidic residues predominate over residues 215 to 228 (EDNKKSPESPKWWE).

This sequence belongs to the M.pulmonis LipAB lipoprotein family.

It localises to the cell membrane. In Mycoplasmopsis pulmonis (strain UAB CTIP) (Mycoplasma pulmonis), this protein is Lipoprotein B (lipB).